A 211-amino-acid chain; its full sequence is Holliday junction branch migration complex subunit RuvA (211 aa).

The tract at residues 1 to 70 is domain I; the sequence is MIQFLQGQVV…QDQIALFGFG (70 aa). The tract at residues 71-149 is domain II; that stretch reads RLAERDLFGQ…QWHKLQMGTG (79 aa). A flexible linker region spans residues 150–158; sequence ETDSTLPTT. The tract at residues 158-211 is domain III; the sequence is TALLEDLEMTLLALGYTQTEIQQAIAMVSQVPDVAQSEDPEVWIRQAIGWLSDH.

The protein belongs to the RuvA family. Homotetramer. Forms an RuvA(8)-RuvB(12)-Holliday junction (HJ) complex. HJ DNA is sandwiched between 2 RuvA tetramers; dsDNA enters through RuvA and exits via RuvB. An RuvB hexamer assembles on each DNA strand where it exits the tetramer. Each RuvB hexamer is contacted by two RuvA subunits (via domain III) on 2 adjacent RuvB subunits; this complex drives branch migration. In the full resolvosome a probable DNA-RuvA(4)-RuvB(12)-RuvC(2) complex forms which resolves the HJ.

It is found in the cytoplasm. In terms of biological role, the RuvA-RuvB-RuvC complex processes Holliday junction (HJ) DNA during genetic recombination and DNA repair, while the RuvA-RuvB complex plays an important role in the rescue of blocked DNA replication forks via replication fork reversal (RFR). RuvA specifically binds to HJ cruciform DNA, conferring on it an open structure. The RuvB hexamer acts as an ATP-dependent pump, pulling dsDNA into and through the RuvAB complex. HJ branch migration allows RuvC to scan DNA until it finds its consensus sequence, where it cleaves and resolves the cruciform DNA. The sequence is that of Holliday junction branch migration complex subunit RuvA from Synechocystis sp. (strain ATCC 27184 / PCC 6803 / Kazusa).